We begin with the raw amino-acid sequence, 466 residues long: Glycine--tRNA ligase (466 aa).

Positions 105 and 168 each coordinate substrate. Residues 200–202 (RNE), 210–215 (FRTREF), 287–288 (EL), and 331–334 (GLTR) contribute to the ATP site. A substrate-binding site is contributed by 215 to 219 (FEQME). Residue 327-331 (EPAAG) participates in substrate binding.

The protein belongs to the class-II aminoacyl-tRNA synthetase family. Homodimer.

Its subcellular location is the cytoplasm. The catalysed reaction is tRNA(Gly) + glycine + ATP = glycyl-tRNA(Gly) + AMP + diphosphate. Its function is as follows. Catalyzes the attachment of glycine to tRNA(Gly). The sequence is that of Glycine--tRNA ligase from Nocardia farcinica (strain IFM 10152).